The chain runs to 461 residues: Na(+)/H(+) antiporter NhaA (461 aa).

Positions 1-23 are disordered; it reads MILSTQRLGRFMSPAPTPAPDAK. The next 12 helical transmembrane spans lie at 48–68, 89–109, 127–147, 157–177, 186–206, 211–231, 236–256, 257–277, 305–325, 339–359, 374–394, and 408–428; these read VGGA…NSPV, LSLG…LVGL, IVPV…YAAV, GWAI…AIIG, IFLL…IAFF, IQAA…FLAQ, FFGA…IVTW, ALVH…GFAV, ISAG…AVGG, IGII…TTWI, WIDV…SLLV, and HAKV…TVVL.

Belongs to the NhaA Na(+)/H(+) (TC 2.A.33) antiporter family.

The protein localises to the cell membrane. The enzyme catalyses Na(+)(in) + 2 H(+)(out) = Na(+)(out) + 2 H(+)(in). Na(+)/H(+) antiporter that extrudes sodium in exchange for external protons. The chain is Na(+)/H(+) antiporter NhaA from Arthrobacter sp. (strain FB24).